Here is a 290-residue protein sequence, read N- to C-terminus: Light-independent protochlorophyllide reductase iron-sulfur ATP-binding protein (290 aa).

ATP is bound by residues 10–15 (GIGKST) and Lys39. Mg(2+) is bound at residue Ser14. Residues Cys95 and Cys129 each coordinate [4Fe-4S] cluster. 180–181 (NR) is an ATP binding site.

This sequence belongs to the NifH/BchL/ChlL family. In terms of assembly, homodimer. Protochlorophyllide reductase is composed of three subunits; ChlL, ChlN and ChlB. It depends on [4Fe-4S] cluster as a cofactor.

It is found in the plastid. It localises to the chloroplast. The catalysed reaction is chlorophyllide a + oxidized 2[4Fe-4S]-[ferredoxin] + 2 ADP + 2 phosphate = protochlorophyllide a + reduced 2[4Fe-4S]-[ferredoxin] + 2 ATP + 2 H2O. It participates in porphyrin-containing compound metabolism; chlorophyll biosynthesis (light-independent). Component of the dark-operative protochlorophyllide reductase (DPOR) that uses Mg-ATP and reduced ferredoxin to reduce ring D of protochlorophyllide (Pchlide) to form chlorophyllide a (Chlide). This reaction is light-independent. The L component serves as a unique electron donor to the NB-component of the complex, and binds Mg-ATP. This chain is Light-independent protochlorophyllide reductase iron-sulfur ATP-binding protein, found in Chaetosphaeridium globosum (Charophycean green alga).